The chain runs to 898 residues: Sodium/hydrogen exchanger 5 (898 aa).

The Cytoplasmic portion of the chain corresponds to 1-48; the sequence is MLSAALLLLPGLPLAGAGATEEPTQESGPLGEPPPGLALFRWQWHEVE. The helical transmembrane segment at 49 to 69 threads the bilayer; it reads APYLVALWILVASLAKIVFHL. The Extracellular portion of the chain corresponds to 70–76; sequence SRKVTSL. The helical transmembrane segment at 77–97 threads the bilayer; the sequence is VPESCLLILLGLVLGGIVLAV. Residues 98 to 106 lie on the Cytoplasmic side of the membrane; that stretch reads AKKAEYQLE. The chain crosses the membrane as a helical span at residues 107–127; that stretch reads PGTFFLFLLPPIVLDSGYFMP. Residues 128–137 lie on the Extracellular side of the membrane; sequence SRLFFDNLGA. Residues 138 to 158 traverse the membrane as a helical segment; sequence ILTYAVVGTLWNAFTTGVALW. Over 159–176 the chain is Cytoplasmic; the sequence is GLQQAGLVAPRVQAGLLD. Residues 177-197 form a helical membrane-spanning segment; it reads FLLFGSLISAVDPVAVLAVFE. Residues 198 to 203 are Extracellular-facing; sequence EVHVNQ. A helical membrane pass occupies residues 204–224; it reads TLFIIIFGESLLNDAVTVVLY. Topologically, residues 225–249 are cytoplasmic; it reads KVCNSFVEMGSANVQATDYLKGVAS. Residues 250-270 form a helical membrane-spanning segment; the sequence is LFVVSLGGAAVGLVFAFLLAL. At 271-279 the chain is on the extracellular side; the sequence is TTRFTKRVR. Residues 280 to 300 traverse the membrane as a helical segment; it reads IIEPLLVFLLAYAAYLTAEMA. The Cytoplasmic portion of the chain corresponds to 301–334; that stretch reads SLSAILAVTMCGLGCKKYVEANISHKSRTAVKYT. A helical membrane pass occupies residues 335 to 355; sequence MKTLASCAETVIFMLLGISAV. Residues 356–363 are Extracellular-facing; it reads DSSKWAWD. A helical membrane pass occupies residues 364–384; that stretch reads SGLVLGTLFFILFFRALGVVL. Over 385–401 the chain is Cytoplasmic; the sequence is QTWALNQFRLVPLDKID. A helical transmembrane segment spans residues 402 to 422; the sequence is QVVMSYGGLRGAVAFALVILL. The Extracellular segment spans residues 423–431; the sequence is DRTKVPAKD. The helical transmembrane segment at 432–452 threads the bilayer; the sequence is YFVATTIVVVFFTVIVQGLTI. Over 453 to 898 the chain is Cytoplasmic; sequence KPLVKWLRVK…CIQFNRGGRL (446 aa). Disordered stretches follow at residues 660–693 and 826–866; these read FTKS…RDLG and EEPQ…PQQE. A compositionally biased stretch (basic residues) spans 663–675; that stretch reads SKPRPRKTSHKKK. The span at 857–866 shows a compositional bias: polar residues; sequence ESSADIPQQE.

It belongs to the monovalent cation:proton antiporter 1 (CPA1) transporter (TC 2.A.36) family. As to quaternary structure, interacts with CHP1 and CHP2. Interacts with ARRB2; facilitates the endocytosis of SLC9A5 from the plasma membrane. Interacts with RACK1; this interaction positively regulates SLC9A5 activity and promote SLC9A5 localization to focal adhesions. Interacts with SCAMP2; this interaction regulates SLC9A5 cell-surface targeting and SLC9A5 activity. In terms of processing, phosphorylated by PRKAA2; promotes its accumulation at the cell surface. Phosphorylated by CSNK2A1 in a manner favoring its beta-arrestin binding and endocytosis. Highest expression level is detected in brain. Expressed in hippocampal neurons (at protein level).

The protein resides in the cell membrane. It localises to the recycling endosome membrane. Its subcellular location is the cell projection. It is found in the dendritic spine membrane. The protein localises to the synaptic cell membrane. The protein resides in the cell junction. It localises to the focal adhesion. The catalysed reaction is Na(+)(in) + H(+)(out) = Na(+)(out) + H(+)(in). Functionally, plasma membrane Na(+)/H(+) antiporter. Mediates the electroneutral exchange of intracellular H(+) ions for extracellular Na(+) in 1:1 stoichiometry. Responsible for regulating intracellular pH homeostasis, in particular in neural tissues. Acts as a negative regulator of dendritic spine growth. Plays a role in postsynaptic remodeling and signaling. Can also contribute to organellar pH regulation, with consequences for receptor tyrosine kinase trafficking. In Mus musculus (Mouse), this protein is Sodium/hydrogen exchanger 5 (Slc9a5).